Here is a 114-residue protein sequence, read N- to C-terminus: Large ribosomal subunit protein bL20 (114 aa).

This sequence belongs to the bacterial ribosomal protein bL20 family.

Binds directly to 23S ribosomal RNA and is necessary for the in vitro assembly process of the 50S ribosomal subunit. It is not involved in the protein synthesizing functions of that subunit. This Anaeromyxobacter dehalogenans (strain 2CP-C) protein is Large ribosomal subunit protein bL20.